Here is a 370-residue protein sequence, read N- to C-terminus: 4-hydroxy-3-methylbut-2-en-1-yl diphosphate synthase (flavodoxin) (370 aa).

4 residues coordinate [4Fe-4S] cluster: C268, C271, C303, and E310.

Belongs to the IspG family. [4Fe-4S] cluster serves as cofactor.

It catalyses the reaction (2E)-4-hydroxy-3-methylbut-2-enyl diphosphate + oxidized [flavodoxin] + H2O + 2 H(+) = 2-C-methyl-D-erythritol 2,4-cyclic diphosphate + reduced [flavodoxin]. It functions in the pathway isoprenoid biosynthesis; isopentenyl diphosphate biosynthesis via DXP pathway; isopentenyl diphosphate from 1-deoxy-D-xylulose 5-phosphate: step 5/6. Its function is as follows. Converts 2C-methyl-D-erythritol 2,4-cyclodiphosphate (ME-2,4cPP) into 1-hydroxy-2-methyl-2-(E)-butenyl 4-diphosphate. This chain is 4-hydroxy-3-methylbut-2-en-1-yl diphosphate synthase (flavodoxin), found in Bacillus anthracis (strain A0248).